A 65-amino-acid polypeptide reads, in one-letter code: uncharacterized protein (65 aa).

Over 1-20 the chain is Cytoplasmic; the sequence is MRFSNCFNKFKFCIGTEKKY. Residues 21–43 traverse the membrane as a helical segment; that stretch reads SFPICTSTYTSFSLFACIWSIFI. At 44 to 65 the chain is on the extracellular side; it reads HISLNKSFIYQKSWYYSFFQNR.

Its subcellular location is the host membrane. This is an uncharacterized protein from Acidianus sp. F28 (AFV-2).